The primary structure comprises 681 residues: Envelope glycoprotein (681 aa).

Residues 1-18 (MKTTCFLISLILIQGTKN) form the signal peptide. At 19–648 (LPILEIASNN…GLGGKWWTSD (630 aa)) the chain is on the extracellular side. 5 disulfide bridges follow: Cys-37/Cys-610, Cys-92/Cys-119, Cys-211/Cys-226, Cys-512/Cys-557, and Cys-602/Cys-609. The segment at 38–188 (SGTLQKTEDV…FSRQGQGYRH (151 aa)) is receptor-binding. N-linked (GlcNAc...) asparagine; by host glycosylation is found at Asn-94, Asn-171, Asn-190, Asn-202, Asn-207, Asn-219, Asn-223, and Asn-255. The tract at residues 223–427 (NQTCAPSKIP…PPTPSSTAQH (205 aa)) is disordered. Composition is skewed to polar residues over residues 244-259 (LTST…TTDP), 281-290 (TSDAVTKQGL), and 308-318 (GGNNTNHSQDA). Residues 277 to 455 (EPHTTSDAVT…PFLDGLINAP (179 aa)) are mucin-like region. N-linked (GlcNAc...) asparagine; by host glycosylation is found at Asn-310, Asn-313, Asn-325, Asn-326, Asn-337, Asn-344, Asn-345, Asn-350, Asn-360, Asn-408, and Asn-487. A compositionally biased stretch (low complexity) spans 337-347 (NTTTISTNNTS). Over residues 348-414 (KHNFSTLSAP…TAPNTTNEHF (67 aa)) the composition is skewed to polar residues. A fusion peptide region spans residues 529–549 (GLSWIPFFGPGIEGLYTAVLI). N-linked (GlcNAc...) asparagine; by host glycosylation occurs at Asn-564. Asn-619 is a glycosylation site (N-linked (GlcNAc...) asparagine; by host). A helical membrane pass occupies residues 649–669 (WGVLTNLGILLLLSIAVLIAL). The Cytoplasmic portion of the chain corresponds to 670–681 (SCICRIFTKYIG). 2 S-palmitoyl cysteine; by host lipidation sites follow: Cys-671 and Cys-673.

It belongs to the filoviruses glycoprotein family. In terms of assembly, homotrimer; each monomer consists of a GP1 and a GP2 subunit linked by disulfide bonds. The resulting peplomers (GP1,2) protrude from the virus surface as spikes. GP1,2 interacts with human CD209 and CLEC4M (collectively referred to as DC-SIGN(R)). Asialoglycoprotein receptor (ASGP-R) may be a liver-specific receptor for GP1,2. Members of the Tyro3 receptor tyrosine kinase family may be cell entry factors interacting with GP1,2. N-glycosylated. Post-translationally, O-glycosylated in the mucin-like region. In terms of processing, specific enzymatic cleavages in vivo yield mature proteins. The precursor is processed into GP1 and GP2 by host cell furin in the trans Golgi, and maybe by other host proteases, to yield the mature GP1 and GP2 proteins. The cleavage site corresponds to the furin optimal cleavage sequence [KR]-X-[KR]-R. GP1 is phosphorylated on serine residues between residues 260 and 273.

It localises to the virion membrane. Its subcellular location is the host cell membrane. GP1 is responsible for binding to the receptor(s) on target cells. Interacts with CD209/DC-SIGN and CLEC4M/DC-SIGNR which act as cofactors for virus entry into the host cell. Binding to CD209 and CLEC4M, which are respectively found on dendritic cells (DCs), and on endothelial cells of liver sinusoids and lymph node sinuses, facilitate infection of macrophages and endothelial cells. These interactions not only facilitate virus cell entry, but also allow capture of viral particles by DCs and subsequent transmission to susceptible cells without DCs infection (trans infection). In terms of biological role, GP2 acts as a class I viral fusion protein. Under the current model, the protein has at least 3 conformational states: pre-fusion native state, pre-hairpin intermediate state, and post-fusion hairpin state. During viral and target cell membrane fusion, the coiled coil regions (heptad repeats) assume a trimer-of-hairpins structure, positioning the fusion peptide in close proximity to the C-terminal region of the ectodomain. The formation of this structure appears to drive apposition and subsequent fusion of viral and target cell membranes. Responsible for penetration of the virus into the cell cytoplasm by mediating the fusion of the membrane of the endocytosed virus particle with the endosomal membrane. Low pH in endosomes induces an irreversible conformational change in GP2, releasing the fusion hydrophobic peptide. This Lake Victoria marburgvirus (strain Musoke-80) (MARV) protein is Envelope glycoprotein (GP).